The following is a 406-amino-acid chain: Argininosuccinate synthase (406 aa).

ATP contacts are provided by residues 11–19 and alanine 38; that span reads AYSGGLDTS. 2 residues coordinate L-citrulline: tyrosine 91 and serine 96. Residue glycine 121 participates in ATP binding. Positions 123, 127, and 128 each coordinate L-aspartate. Asparagine 127 is an L-citrulline binding site. L-citrulline is bound by residues arginine 131, serine 181, serine 190, glutamate 266, and tyrosine 278.

It belongs to the argininosuccinate synthase family. Type 1 subfamily. In terms of assembly, homotetramer.

It localises to the cytoplasm. It carries out the reaction L-citrulline + L-aspartate + ATP = 2-(N(omega)-L-arginino)succinate + AMP + diphosphate + H(+). It functions in the pathway amino-acid biosynthesis; L-arginine biosynthesis; L-arginine from L-ornithine and carbamoyl phosphate: step 2/3. The protein is Argininosuccinate synthase of Campylobacter jejuni subsp. doylei (strain ATCC BAA-1458 / RM4099 / 269.97).